Here is a 538-residue protein sequence, read N- to C-terminus: MSSAKRVKLSHSKAPGPFRKPSSGDRAAAKVLTKKITQAPKAAAPIKQKAREAEEDDDDDDKDDKDEEDEEQNDDSSDEASENDDSTPTVEEATKEGQTELPSKEETPTKSFRDLGIVEPLCEACEALKFKKPTPIQEQAIPLALQGRDVIGIAETGSGKTAAFALPILQSLLEKPQPLFGLVLAPTRELAAQIGQTFEALGASISLRCAVVVGGLDMVSQSTALGKKPHIVVATPGRLLDHLEKTKGFSLRSLKFLVMDEADRLLDLDFGPILDKILKFLPRERRTFLFSATMSSKVESLQRASLRDPLKVSVSSSQEKTVSTLIQNPLFIPHKHKDVYLIYLANEFAGKTTIVFTRTVNEAQRVSILLRTLSFGAIPLHGQLSQSMRLGALNKFKARSRDILVATDVAARGLDIPEVDLVINFDMPQDSMTYIHRVGRTARAGRSGRAISIITQYDLELWLRIEKAALNGRKLPLFQPDKEEVMVFKERVEEAQRHAREEMKALHEDRGKKGAVLKGRKRGSATKRRHDDMDAEEG.

The segment covering 1-11 (MSSAKRVKLSH) has biased composition (basic residues). The interval 1-112 (MSSAKRVKLS…SKEETPTKSF (112 aa)) is disordered. Positions 34 to 47 (KKITQAPKAAAPIK) are enriched in low complexity. Residues 53–85 (AEEDDDDDDKDDKDEEDEEQNDDSSDEASENDD) show a composition bias toward acidic residues. Residues 92-112 (EATKEGQTELPSKEETPTKSF) are compositionally biased toward basic and acidic residues. The Q motif signature appears at 110 to 138 (KSFRDLGIVEPLCEACEALKFKKPTPIQE). The 172-residue stretch at 141–312 (IPLALQGRDV…RASLRDPLKV (172 aa)) folds into the Helicase ATP-binding domain. 154-161 (AETGSGKT) contacts ATP. Positions 260–263 (DEAD) match the DEAD box motif. The Helicase C-terminal domain maps to 336-486 (HKDVYLIYLA…LFQPDKEEVM (151 aa)). Basic and acidic residues predominate over residues 498–512 (HAREEMKALHEDRGK). Residues 498–538 (HAREEMKALHEDRGKKGAVLKGRKRGSATKRRHDDMDAEEG) are disordered. Over residues 513 to 528 (KGAVLKGRKRGSATKR) the composition is skewed to basic residues.

The protein belongs to the DEAD box helicase family. DDX47/RRP3 subfamily. In terms of assembly, interacts with the SSU processome.

It localises to the nucleus. It catalyses the reaction ATP + H2O = ADP + phosphate + H(+). Functionally, ATP-dependent rRNA helicase required for pre-ribosomal RNA processing. Involved in the maturation of the 35S-pre-rRNA and to its cleavage to mature 18S rRNA. The protein is ATP-dependent rRNA helicase RRP3 of Pyricularia oryzae (strain 70-15 / ATCC MYA-4617 / FGSC 8958) (Rice blast fungus).